We begin with the raw amino-acid sequence, 85 residues long: Large ribosomal subunit protein bL27 (85 aa).

The interval Met1–Leu21 is disordered.

Belongs to the bacterial ribosomal protein bL27 family.

In Erwinia tasmaniensis (strain DSM 17950 / CFBP 7177 / CIP 109463 / NCPPB 4357 / Et1/99), this protein is Large ribosomal subunit protein bL27.